We begin with the raw amino-acid sequence, 248 residues long: ATP synthase subunit a, chloroplastic (248 aa).

The next 4 membrane-spanning stretches (helical) occupy residues 96–116, 135–155, 200–220, and 221–241; these read VPFIGTMFLFIFASNWSGALL, INTTVALALLTSVAYFYAGLY, LVVAVLVSLVPLIVPVPMMLL, and GLFTSGIQALIFATLAAAYIG.

The protein belongs to the ATPase A chain family. F-type ATPases have 2 components, CF(1) - the catalytic core - and CF(0) - the membrane proton channel. CF(1) has five subunits: alpha(3), beta(3), gamma(1), delta(1), epsilon(1). CF(0) has four main subunits: a, b, b' and c.

The protein resides in the plastid. The protein localises to the chloroplast thylakoid membrane. Key component of the proton channel; it plays a direct role in the translocation of protons across the membrane. This chain is ATP synthase subunit a, chloroplastic, found in Adiantum capillus-veneris (Maidenhair fern).